We begin with the raw amino-acid sequence, 78 residues long: Large ribosomal subunit protein bL28 (78 aa).

Residues 1-29 (MSAHCQVTGRQPSFGKSVSHSHRRTSRRW) form a disordered region.

Belongs to the bacterial ribosomal protein bL28 family.

The protein is Large ribosomal subunit protein bL28 of Corynebacterium efficiens (strain DSM 44549 / YS-314 / AJ 12310 / JCM 11189 / NBRC 100395).